The following is a 297-amino-acid chain: Homoserine kinase (297 aa).

82–92 (PLTRGLGSSAS) contacts ATP.

It belongs to the GHMP kinase family. Homoserine kinase subfamily.

It localises to the cytoplasm. The catalysed reaction is L-homoserine + ATP = O-phospho-L-homoserine + ADP + H(+). It functions in the pathway amino-acid biosynthesis; L-threonine biosynthesis; L-threonine from L-aspartate: step 4/5. Its function is as follows. Catalyzes the ATP-dependent phosphorylation of L-homoserine to L-homoserine phosphate. The chain is Homoserine kinase from Bacillus cereus (strain ATCC 14579 / DSM 31 / CCUG 7414 / JCM 2152 / NBRC 15305 / NCIMB 9373 / NCTC 2599 / NRRL B-3711).